Here is a 699-residue protein sequence, read N- to C-terminus: Bifunctional protein GAL10 (699 aa).

Positions 1-357 (MTAQLQSEST…TTENPFGYQL (357 aa)) are galactowaldenase. 13-44 (IVLVTGGAGYIGSHTVVELIENGYDCVVADNL) provides a ligand contact to NAD(+). A mutarotase region spans residues 358–699 (RGVEARFSAE…YGSKIVYRFS (342 aa)). The For mutarotase activity role is filled by H537. S562 is subject to Phosphoserine.

This sequence in the N-terminal section; belongs to the NAD(P)-dependent epimerase/dehydratase family. The protein in the C-terminal section; belongs to the aldose epimerase family. NAD(+) serves as cofactor.

It carries out the reaction UDP-alpha-D-glucose = UDP-alpha-D-galactose. The catalysed reaction is alpha-D-glucose = beta-D-glucose. The protein operates within carbohydrate metabolism; galactose metabolism. It functions in the pathway carbohydrate metabolism; hexose metabolism. Mutarotase converts alpha-aldose to the beta-anomer. It is active on D-glucose, L-arabinose, D-xylose, D-galactose, maltose and lactose. This Saccharomyces cerevisiae (strain ATCC 204508 / S288c) (Baker's yeast) protein is Bifunctional protein GAL10 (GAL10).